The following is a 477-amino-acid chain: ETS translocation variant 1 (477 aa).

S94 is modified (phosphoserine). The tract at residues 128–179 (PQVGMRPSNPPTPSSTPVSPLHHASPNSTHTPKPDRAFPAHLPPSQSIPDSS) is disordered. Phosphoserine; by RPS6KA1 and RPS6KA5 occurs at positions 191 and 216. Residue K317 forms a Glycyl lysine isopeptide (Lys-Gly) (interchain with G-Cter in SUMO2) linkage. Positions 335–415 (LQLWQFLVAL…AGERYVYKFV (81 aa)) form a DNA-binding region, ETS.

This sequence belongs to the ETS family. Post-translationally, sumoylated. In terms of processing, phosphorylated at Ser-191 and Ser-216 by RPS6KA1 and RPS6KA5; phosphorylation activates transcriptional activity. As to expression, very highly expressed in brain, highly expressed in testis, lung and heart, moderately in spleen, small intestine, pancreas and colon, weakly in liver, prostate and thymus, very weakly in skeletal muscle, kidney and ovary and not in placenta and peripheral blood leukocytes.

Its subcellular location is the nucleus. In terms of biological role, transcriptional activator that binds to DNA sequences containing the consensus pentanucleotide 5'-CGGA[AT]-3'. Required for olfactory dopaminergic neuron differentiation; may directly activate expression of tyrosine hydroxylase (TH). This chain is ETS translocation variant 1, found in Homo sapiens (Human).